Reading from the N-terminus, the 326-residue chain is Glycerol-3-phosphate dehydrogenase [NAD(P)+] (326 aa).

Residues Trp-15, Arg-35, and Lys-107 each coordinate NADPH. Lys-107, Gly-135, and Ser-137 together coordinate sn-glycerol 3-phosphate. An NADPH-binding site is contributed by Ala-139. The sn-glycerol 3-phosphate site is built by Lys-190, Asp-243, Ser-253, Arg-254, and Asn-255. The Proton acceptor role is filled by Lys-190. Arg-254 contributes to the NADPH binding site. NADPH-binding residues include Leu-273 and Glu-275.

Belongs to the NAD-dependent glycerol-3-phosphate dehydrogenase family.

Its subcellular location is the cytoplasm. The enzyme catalyses sn-glycerol 3-phosphate + NAD(+) = dihydroxyacetone phosphate + NADH + H(+). It catalyses the reaction sn-glycerol 3-phosphate + NADP(+) = dihydroxyacetone phosphate + NADPH + H(+). It participates in membrane lipid metabolism; glycerophospholipid metabolism. Catalyzes the reduction of the glycolytic intermediate dihydroxyacetone phosphate (DHAP) to sn-glycerol 3-phosphate (G3P), the key precursor for phospholipid synthesis. The sequence is that of Glycerol-3-phosphate dehydrogenase [NAD(P)+] from Bradyrhizobium sp. (strain BTAi1 / ATCC BAA-1182).